The following is a 505-amino-acid chain: Lysine--tRNA ligase (505 aa).

Mg(2+)-binding residues include E415 and E422.

It belongs to the class-II aminoacyl-tRNA synthetase family. Homodimer. Mg(2+) serves as cofactor.

It is found in the cytoplasm. It catalyses the reaction tRNA(Lys) + L-lysine + ATP = L-lysyl-tRNA(Lys) + AMP + diphosphate. The protein is Lysine--tRNA ligase of Vibrio parahaemolyticus serotype O3:K6 (strain RIMD 2210633).